A 31-amino-acid polypeptide reads, in one-letter code: Sarcolipin (31 aa).

Residues 1–7 (MGINTRE) are Cytoplasmic-facing. The helical transmembrane segment at 8 to 26 (LFLNFTIVLITVILMWLLV) threads the bilayer. Topologically, residues 27–31 (RSYQY) are lumenal.

This sequence belongs to the sarcolipin family. In terms of assembly, homooligomer. Can also form heterooligomers with other sarcoplasmic/endoplasmic reticulum calcium ATPase (SERCA) regulators ARLN, ERLN, PLN and STRIT1/DWORF. Monomer. Interacts with calcium ATPase ATP2A1/SERCA1. Interacts as a monomer with ATP2A2/SERCA2; the interaction decreases ATP2A2 Ca(2+) affinity. Interacts with VMP1; VMP1 competes with PLN and SLN to prevent them from forming an inhibitory complex with ATP2A2.

The protein localises to the sarcoplasmic reticulum membrane. The protein resides in the endoplasmic reticulum membrane. Its function is as follows. Reversibly inhibits the activity of ATP2A1/SERCA1 and ATP2A2/SERCA2 in sarcoplasmic reticulum by decreasing the apparent affinity of the ATPase for Ca(2+). Also inhibits the activity of ATP2A3/SERCA3. Modulates calcium re-uptake during muscle relaxation and plays an important role in calcium homeostasis in muscle. Required for muscle-based, non-shivering thermogenesis. The protein is Sarcolipin of Homo sapiens (Human).